Reading from the N-terminus, the 171-residue chain is Sec-independent protein translocase protein TatB (171 aa).

A helical transmembrane segment spans residues 2–22; sequence FDGIGFMELLLIGVLGLVVLG. The tract at residues 69 to 171 is disordered; it reads SKGLSNLSPE…DTRSNPKANG (103 aa). The span at 88-97 shows a compositional bias: polar residues; the sequence is QAAQSVNRPY. Composition is skewed to low complexity over residues 114-130 and 138-158; these read HSPV…HTSP and PTAT…SEPS. The span at 160–171 shows a compositional bias: polar residues; that stretch reads GADTRSNPKANG.

Belongs to the TatB family. As to quaternary structure, the Tat system comprises two distinct complexes: a TatABC complex, containing multiple copies of TatA, TatB and TatC subunits, and a separate TatA complex, containing only TatA subunits. Substrates initially bind to the TatABC complex, which probably triggers association of the separate TatA complex to form the active translocon.

It is found in the cell inner membrane. Its function is as follows. Part of the twin-arginine translocation (Tat) system that transports large folded proteins containing a characteristic twin-arginine motif in their signal peptide across membranes. Together with TatC, TatB is part of a receptor directly interacting with Tat signal peptides. TatB may form an oligomeric binding site that transiently accommodates folded Tat precursor proteins before their translocation. The polypeptide is Sec-independent protein translocase protein TatB (Shewanella baltica (strain OS185)).